The primary structure comprises 445 residues: Mutanase Pc12g07500 (445 aa).

The signal sequence occupies residues 1-21 (MIWKSLFSALAILTHILPALT). N-linked (GlcNAc...) asparagine glycosylation is found at Asn-386 and Asn-437.

It belongs to the glycosyl hydrolase 71 family. As to quaternary structure, monomer.

Its subcellular location is the secreted. It catalyses the reaction Endohydrolysis of (1-&gt;3)-alpha-D-glucosidic linkages in isolichenin, pseudonigeran and nigeran.. Hydrolyzes 1,3-alpha-glucan predominantly into pentasaccharides. May enhance the efficacy of fungal antibiotics by degrading bacterial exopolysaccharides. The chain is Mutanase Pc12g07500 from Penicillium rubens (strain ATCC 28089 / DSM 1075 / NRRL 1951 / Wisconsin 54-1255) (Penicillium chrysogenum).